The chain runs to 416 residues: Gamma-glutamyl phosphate reductase (416 aa).

It belongs to the gamma-glutamyl phosphate reductase family.

Its subcellular location is the cytoplasm. It catalyses the reaction L-glutamate 5-semialdehyde + phosphate + NADP(+) = L-glutamyl 5-phosphate + NADPH + H(+). The protein operates within amino-acid biosynthesis; L-proline biosynthesis; L-glutamate 5-semialdehyde from L-glutamate: step 2/2. In terms of biological role, catalyzes the NADPH-dependent reduction of L-glutamate 5-phosphate into L-glutamate 5-semialdehyde and phosphate. The product spontaneously undergoes cyclization to form 1-pyrroline-5-carboxylate. The chain is Gamma-glutamyl phosphate reductase from Streptococcus uberis (strain ATCC BAA-854 / 0140J).